Here is a 141-residue protein sequence, read N- to C-terminus: Nucleoside diphosphate kinase (141 aa).

Lys-11, Phe-59, Arg-87, Thr-93, Arg-104, and Asn-114 together coordinate ATP. The active-site Pros-phosphohistidine intermediate is the His-117.

Belongs to the NDK family. As to quaternary structure, homotetramer. It depends on Mg(2+) as a cofactor.

The protein resides in the cytoplasm. The catalysed reaction is a 2'-deoxyribonucleoside 5'-diphosphate + ATP = a 2'-deoxyribonucleoside 5'-triphosphate + ADP. The enzyme catalyses a ribonucleoside 5'-diphosphate + ATP = a ribonucleoside 5'-triphosphate + ADP. In terms of biological role, major role in the synthesis of nucleoside triphosphates other than ATP. The ATP gamma phosphate is transferred to the NDP beta phosphate via a ping-pong mechanism, using a phosphorylated active-site intermediate. This Paraburkholderia phytofirmans (strain DSM 17436 / LMG 22146 / PsJN) (Burkholderia phytofirmans) protein is Nucleoside diphosphate kinase.